Consider the following 465-residue polypeptide: Macrophage metalloelastase (465 aa).

The signal sequence occupies residues 1 to 21 (MKFLLVLVLLVSLQVSACGAA). Residues 22-101 (PMNESEFAEW…DVQHLRAVPQ (80 aa)) constitute a propeptide, activation peptide. A Cysteine switch motif is present at residues 86–93 (SRCGVPDV). Cys-88 contributes to the Zn(2+) binding site. Ca(2+)-binding residues include Asp-120 and Asp-154. Residues His-164 and Asp-166 each coordinate Zn(2+). The Ca(2+) site is built by Asp-171, Gly-172, Gly-174, and Thr-176. A Zn(2+)-binding site is contributed by His-179. The Ca(2+) site is built by Gly-186 and Asp-190. Residue His-192 participates in Zn(2+) binding. Residues Asp-194, Glu-195, and Glu-197 each contribute to the Ca(2+) site. His-214 contacts Zn(2+). The active site involves Glu-215. Residues His-218 and His-224 each contribute to the Zn(2+) site. Cysteines 278 and 465 form a disulfide. Hemopexin repeat units lie at residues 281 to 324 (SLSF…WPTI), 325 to 371 (PSGI…GFPA), 373 to 421 (VKKI…FPGI), and 422 to 465 (RPKI…WFGC). A Ca(2+)-binding site is contributed by Asp-285. A glycan (N-linked (GlcNAc...) asparagine) is linked at Asn-313. The Ca(2+) site is built by Asp-377 and Asp-426.

This sequence belongs to the peptidase M10A family. Ca(2+) serves as cofactor. It depends on Zn(2+) as a cofactor.

It is found in the secreted. Its subcellular location is the extracellular space. It localises to the extracellular matrix. It carries out the reaction Hydrolysis of soluble and insoluble elastin. Specific cleavages are also produced at 14-Ala-|-Leu-15 and 16-Tyr-|-Leu-17 in the B chain of insulin.. In terms of biological role, may be involved in tissue injury and remodeling. Has significant elastolytic activity. Can accept large and small amino acids at the P1' site, but has a preference for leucine. Aromatic or hydrophobic residues are preferred at the P1 site, with small hydrophobic residues (preferably alanine) occupying P3. In Rattus norvegicus (Rat), this protein is Macrophage metalloelastase (Mmp12).